The sequence spans 308 residues: Dual oxidase maturation factor 1 (308 aa).

Residues 1–21 (MQANIFPFYPQPRTSFKFDTK) are Extracellular-facing. A helical transmembrane segment spans residues 22 to 42 (IIEIIIICIVTACTFIIILPG). The Cytoplasmic portion of the chain corresponds to 43–49 (IRGKSRS). A helical membrane pass occupies residues 50–70 (IWLFRILTSLFIGAVILAVNF). Residues 71–172 (TSDWETGIVT…SPCGLFQQYC (102 aa)) are Extracellular-facing. Residues Asn94, Asn107, and Asn119 are each glycosylated (N-linked (GlcNAc...) asparagine). A helical membrane pass occupies residues 173–195 (ISTYYSSEIMWVAFGSWILYNVL). At 196–199 (FSMP) the chain is on the cytoplasmic side. A helical membrane pass occupies residues 200–220 (VILYGICMMFVTAICMLVSLI). At 221–247 (SFASVRQAPVCNIHFGNAVLKTHFGVS) the chain is on the extracellular side. A helical membrane pass occupies residues 248–268 (YWLSLVTGLFCLIVSLVLLFL). At 269 to 308 (YKTQPKVIRLIFSYGEEEDLSDKSENEEEHSSALSLNEML) the chain is on the cytoplasmic side.

It belongs to the DUOXA family.

Its subcellular location is the membrane. In terms of biological role, possible role in maturation and transport from the endoplasmic reticulum to the plasma membrane of functional dual oxidase. The protein is Dual oxidase maturation factor 1 (duoxa1) of Xenopus tropicalis (Western clawed frog).